The sequence spans 279 residues: D-aminoacyl-tRNA deacylase (279 aa).

The disordered stretch occupies residues G81 to G100.

The protein belongs to the DtdA deacylase family. Monomer. Zn(2+) is required as a cofactor.

The enzyme catalyses a D-aminoacyl-tRNA + H2O = a tRNA + a D-alpha-amino acid + H(+). It catalyses the reaction glycyl-tRNA(Ala) + H2O = tRNA(Ala) + glycine + H(+). D-aminoacyl-tRNA deacylase with broad substrate specificity. By recycling D-aminoacyl-tRNA to D-amino acids and free tRNA molecules, this enzyme counteracts the toxicity associated with the formation of D-aminoacyl-tRNA entities in vivo. The protein is D-aminoacyl-tRNA deacylase of Aeropyrum pernix (strain ATCC 700893 / DSM 11879 / JCM 9820 / NBRC 100138 / K1).